We begin with the raw amino-acid sequence, 486 residues long: Transcriptional adapter 2-beta (486 aa).

The ZZ-type zinc finger occupies 4-59 (LGKKYCVNCLADVTNLRIRCAECQDIELCPECFSAGAEIGNHRRWHGYQQVDGGRF). Residues cysteine 9, cysteine 12, cysteine 23, cysteine 26, cysteine 32, cysteine 35, histidine 45, and histidine 49 each contribute to the Zn(2+) site. Residues 65–118 (EAEGGWTSREEQSLLDAIEQYGFGNWEDMAAHVGASRTPQEVMDHYVSMYIHGN) form the SANT domain. 2 disordered regions span residues 237–291 (KKDK…EKGQ) and 343–377 (EYEAARHKREKRKENKSIAGSKRGSSGGGGGTAGL). 2 stretches are compositionally biased toward gly residues: residues 247–262 (GTVGVGGPGGAVGSGS) and 367–377 (SSGGGGGTAGL).

The protein resides in the nucleus. Functionally, transcriptional coactivator. The chain is Transcriptional adapter 2-beta (tada2b) from Danio rerio (Zebrafish).